Consider the following 323-residue polypeptide: MRQVTLYRYSVPMEAGVVLRNQRLKTRDGLIVRLQEDERLGWGEIAPLPEFSLETLAEAESAALEQLAAWAAGHAFSEDLPPSVAFGLSCAQAELDQHLPQAADYRKAPLCNGDPDELFEMLQAMPGEKVAKVKVGLYEAVRDGMIVNVLLEALPDLKLRLDANRSWTRAKADGFARYVAPSLRSRIAFLEEPCKTREESREFARETGINIAWDESVREADFRVEAEPGVSAIVIKPTLVGSLARCQQLVQETHQAGLTAVISSSIESSLGLTQLARLASWLTPDTIPGLDTLDLMQTQVIQRWPDSALPLLAAEQLDVVWQS.

Residue lysine 134 is the Proton donor of the active site. Mg(2+) is bound by residues aspartate 162, glutamate 191, and aspartate 214. The Proton acceptor role is filled by lysine 236.

It belongs to the mandelate racemase/muconate lactonizing enzyme family. MenC type 1 subfamily. It depends on a divalent metal cation as a cofactor.

The enzyme catalyses (1R,6R)-6-hydroxy-2-succinyl-cyclohexa-2,4-diene-1-carboxylate = 2-succinylbenzoate + H2O. Its pathway is quinol/quinone metabolism; 1,4-dihydroxy-2-naphthoate biosynthesis; 1,4-dihydroxy-2-naphthoate from chorismate: step 4/7. It participates in quinol/quinone metabolism; menaquinone biosynthesis. In terms of biological role, converts 2-succinyl-6-hydroxy-2,4-cyclohexadiene-1-carboxylate (SHCHC) to 2-succinylbenzoate (OSB). The polypeptide is o-succinylbenzoate synthase (Pectobacterium atrosepticum (strain SCRI 1043 / ATCC BAA-672) (Erwinia carotovora subsp. atroseptica)).